Here is a 376-residue protein sequence, read N- to C-terminus: Heat stress transcription factor A-2a (376 aa).

The segment at 137-168 (LKTIKRRRPPPSSPPSSSSSSSSSQHQQQPAA) is disordered. Low complexity predominate over residues 151 to 160 (PSSSSSSSSS). Residues 182–229 (VNRLQRDKSVLIAEVVKLRQEQQTTRAQMQAMEERISAAEQKQQQMTV) are a coiled coil. Residues 185-235 (LQRDKSVLIAEVVKLRQEQQTTRAQMQAMEERISAAEQKQQQMTVFLARAM) form a hydrophobic repeat HR-A/B region. The short motif at 265–269 (KKRRR) is the Nuclear localization signal element. Disordered regions lie at residues 296–319 (VAEP…DTES) and 332–362 (KQRE…DDDD). A compositionally biased stretch (gly residues) spans 307-316 (GDGGGGGGGD). Positions 318–325 (ESFWMQLL) match the AHA motif. Over residues 352 to 362 (VDNDEEDDDDD) the composition is skewed to acidic residues. Positions 366 to 373 (LVQSIYHL) match the Nuclear export signal motif.

It belongs to the HSF family. Class A subfamily. Homotrimer. Exhibits temperature-dependent phosphorylation.

The protein localises to the cytoplasm. Its subcellular location is the nucleus. Functionally, transcriptional regulator that specifically binds DNA of heat shock promoter elements (HSE). The chain is Heat stress transcription factor A-2a (HSFA2A) from Oryza sativa subsp. japonica (Rice).